The following is a 222-amino-acid chain: Putative thymidylate synthase (222 aa).

The active site involves Cys-146.

It belongs to the thymidylate synthase family. Archaeal-type ThyA subfamily. As to quaternary structure, monomer.

It is found in the cytoplasm. It functions in the pathway pyrimidine metabolism; dTTP biosynthesis. Its function is as follows. May catalyze the biosynthesis of dTMP using an unknown cosubstrate. The protein is Putative thymidylate synthase of Methanothermobacter thermautotrophicus (strain ATCC 29096 / DSM 1053 / JCM 10044 / NBRC 100330 / Delta H) (Methanobacterium thermoautotrophicum).